The following is a 90-amino-acid chain: Acylphosphatase (90 aa).

The Acylphosphatase-like domain occupies 3–90 (RVLIKLTGKV…DIYLDFSIVR (88 aa)). Residues R18 and N36 contribute to the active site.

Belongs to the acylphosphatase family.

It carries out the reaction an acyl phosphate + H2O = a carboxylate + phosphate + H(+). The chain is Acylphosphatase (acyP) from Shewanella oneidensis (strain ATCC 700550 / JCM 31522 / CIP 106686 / LMG 19005 / NCIMB 14063 / MR-1).